The sequence spans 298 residues: Ribosomal protein L11 methyltransferase (298 aa).

4 residues coordinate S-adenosyl-L-methionine: threonine 139, glycine 163, aspartate 185, and asparagine 232.

The protein belongs to the methyltransferase superfamily. PrmA family.

The protein localises to the cytoplasm. The catalysed reaction is L-lysyl-[protein] + 3 S-adenosyl-L-methionine = N(6),N(6),N(6)-trimethyl-L-lysyl-[protein] + 3 S-adenosyl-L-homocysteine + 3 H(+). In terms of biological role, methylates ribosomal protein L11. The protein is Ribosomal protein L11 methyltransferase of Microcystis aeruginosa (strain NIES-843 / IAM M-2473).